We begin with the raw amino-acid sequence, 392 residues long: Homoserine O-acetyltransferase (392 aa).

Residues 52–356 (NVVVVLHALT…ICGHDGFLVE (305 aa)) form the AB hydrolase-1 domain. Catalysis depends on S157, which acts as the Nucleophile. R227 contacts substrate. Active-site residues include D320 and H350. D351 provides a ligand contact to substrate. The interval 373-392 (SQSAGPGGAGPGSRKGTTRR) is disordered.

This sequence belongs to the AB hydrolase superfamily. MetX family. In terms of assembly, homodimer.

It is found in the cytoplasm. The enzyme catalyses L-homoserine + acetyl-CoA = O-acetyl-L-homoserine + CoA. It functions in the pathway amino-acid biosynthesis; L-methionine biosynthesis via de novo pathway; O-acetyl-L-homoserine from L-homoserine: step 1/1. In terms of biological role, transfers an acetyl group from acetyl-CoA to L-homoserine, forming acetyl-L-homoserine. The chain is Homoserine O-acetyltransferase from Mycobacterium avium (strain 104).